A 560-amino-acid chain; its full sequence is Hemocyanin, units G and H (560 aa).

Residues C1 and C11 are joined by a disulfide bond. The unit G stretch occupies residues 1–184 (CPTPDAPQYA…AKGLVSQHIE (184 aa)). A cross-link (2'-(S-cysteinyl)-histidine (Cys-His)) is located at residues 12-14 (CLH). C93 and C98 are oxidised to a cystine. N142 carries an N-linked (GlcNAc...) asparagine glycan. The interval 185-560 (DHDTETLIRK…KPGTGTQLTR (376 aa)) is unit H. Residue H230 coordinates Cu cation. The cysteines at positions 236 and 246 are disulfide-linked. Residue N240 is glycosylated (N-linked (GlcNAc...) asparagine). A cross-link (2'-(S-cysteinyl)-histidine (Cys-His)) is located at residues 247-249 (CQH). 5 residues coordinate Cu cation: H249, H258, H358, H362, and H389. Disulfide bonds link C348-C415 and C476-C482.

Belongs to the tyrosinase family. Hemocyanin subfamily. In terms of assembly, decamers of large identical subunits (390 kDa), each containing 8 globular oxygen-binding functional units. The cofactor is Cu(2+).

Hemocyanins are copper-containing oxygen carriers occurring freely dissolved in the hemolymph of many mollusks and arthropods. The chain is Hemocyanin, units G and H from Sepia officinalis (Common cuttlefish).